Reading from the N-terminus, the 305-residue chain is Ribosomal RNA small subunit methyltransferase H (305 aa).

S-adenosyl-L-methionine-binding positions include 47-49 (GGH), D66, F93, D108, and Q115. The disordered stretch occupies residues 280-305 (ASAEEQERNPRSRSAKLRIARKRSES). The span at 290–305 (RSRSAKLRIARKRSES) shows a compositional bias: basic residues.

It belongs to the methyltransferase superfamily. RsmH family.

It localises to the cytoplasm. It catalyses the reaction cytidine(1402) in 16S rRNA + S-adenosyl-L-methionine = N(4)-methylcytidine(1402) in 16S rRNA + S-adenosyl-L-homocysteine + H(+). Specifically methylates the N4 position of cytidine in position 1402 (C1402) of 16S rRNA. The polypeptide is Ribosomal RNA small subunit methyltransferase H (Synechococcus sp. (strain WH7803)).